The following is a 252-amino-acid chain: Imidazole glycerol phosphate synthase subunit HisF (252 aa).

Catalysis depends on residues Asp-12 and Asp-131.

It belongs to the HisA/HisF family. Heterodimer of HisH and HisF.

The protein resides in the cytoplasm. It carries out the reaction 5-[(5-phospho-1-deoxy-D-ribulos-1-ylimino)methylamino]-1-(5-phospho-beta-D-ribosyl)imidazole-4-carboxamide + L-glutamine = D-erythro-1-(imidazol-4-yl)glycerol 3-phosphate + 5-amino-1-(5-phospho-beta-D-ribosyl)imidazole-4-carboxamide + L-glutamate + H(+). It functions in the pathway amino-acid biosynthesis; L-histidine biosynthesis; L-histidine from 5-phospho-alpha-D-ribose 1-diphosphate: step 5/9. In terms of biological role, IGPS catalyzes the conversion of PRFAR and glutamine to IGP, AICAR and glutamate. The HisF subunit catalyzes the cyclization activity that produces IGP and AICAR from PRFAR using the ammonia provided by the HisH subunit. In Thermus thermophilus (strain ATCC BAA-163 / DSM 7039 / HB27), this protein is Imidazole glycerol phosphate synthase subunit HisF.